A 523-amino-acid chain; its full sequence is Probable malate:quinone oxidoreductase 1 (523 aa).

Belongs to the MQO family. It depends on FAD as a cofactor.

The enzyme catalyses (S)-malate + a quinone = a quinol + oxaloacetate. It functions in the pathway carbohydrate metabolism; tricarboxylic acid cycle; oxaloacetate from (S)-malate (quinone route): step 1/1. The chain is Probable malate:quinone oxidoreductase 1 from Pseudomonas aeruginosa (strain ATCC 15692 / DSM 22644 / CIP 104116 / JCM 14847 / LMG 12228 / 1C / PRS 101 / PAO1).